A 428-amino-acid polypeptide reads, in one-letter code: Dihydroorotase (428 aa).

Zn(2+)-binding residues include His-56 and His-58. Substrate contacts are provided by residues 58 to 60 (HLR) and Asn-90. Residues Asp-150, His-177, and His-230 each contribute to the Zn(2+) site. Asn-276 serves as a coordination point for substrate. Position 303 (Asp-303) interacts with Zn(2+). Asp-303 is a catalytic residue. His-307 contacts substrate.

Belongs to the metallo-dependent hydrolases superfamily. DHOase family. Class I DHOase subfamily. Zn(2+) is required as a cofactor.

The enzyme catalyses (S)-dihydroorotate + H2O = N-carbamoyl-L-aspartate + H(+). It participates in pyrimidine metabolism; UMP biosynthesis via de novo pathway; (S)-dihydroorotate from bicarbonate: step 3/3. Functionally, catalyzes the reversible cyclization of carbamoyl aspartate to dihydroorotate. This Streptomyces coelicolor (strain ATCC BAA-471 / A3(2) / M145) protein is Dihydroorotase.